Reading from the N-terminus, the 330-residue chain is tRNA-modifying protein YgfZ (330 aa).

Folate contacts are provided by tryptophan 28 and tryptophan 190.

Belongs to the tRNA-modifying YgfZ family.

The protein localises to the cytoplasm. Its function is as follows. Folate-binding protein involved in regulating the level of ATP-DnaA and in the modification of some tRNAs. It is probably a key factor in regulatory networks that act via tRNA modification, such as initiation of chromosomal replication. The sequence is that of tRNA-modifying protein YgfZ from Yersinia pestis bv. Antiqua (strain Antiqua).